The following is a 328-amino-acid chain: Twinfilin (328 aa).

The 137-residue stretch at 1–137 (MSASVELKPT…DYQQIMKSLS (137 aa)) folds into the ADF-H 1 domain. At Ser-143 the chain carries Phosphoserine. The region spanning 173-304 (GVAMSIDDKA…TEKEILHAAG (132 aa)) is the ADF-H 2 domain. Positions 302–328 (AAGISSPQAETSTTKTGFSRPRPPRRR) are disordered. A compositionally biased stretch (polar residues) spans 306-318 (SSPQAETSTTKTG).

It belongs to the actin-binding proteins ADF family. Twinfilin subfamily. Interacts with G-actin; ADP-actin form.

Its subcellular location is the cytoplasm. It localises to the cytoskeleton. Actin-binding protein involved in motile and morphological processes. Inhibits actin polymerization, likely by sequestering G-actin. Prevents actin filament assembly by forming a 1:1 complex with actin monomers, and inhibits the nucleotide exchange reaction of actin monomers. The chain is Twinfilin (twf1) from Schizosaccharomyces pombe (strain 972 / ATCC 24843) (Fission yeast).